Reading from the N-terminus, the 329-residue chain is GDP-mannose transporter (329 aa).

Residues 1-13 (MSELKVDTGRLSH) are Cytoplasmic-facing. Residues 14–34 (IANSGPMSILAYCASSILMTV) traverse the membrane as a helical segment. Over 35 to 44 (TNKCVVGSDK) the chain is Lumenal. The helical transmembrane segment at 45–65 (FNMLFVMLFAQSLVCVTALVL) threads the bilayer. Residues 66–79 (LKALGYVQYRPLNK) are Cytoplasmic-facing. The chain crosses the membrane as a helical span at residues 80–100 (VDVKNWLLISVLLVLMTYTSS). Topologically, residues 101–109 (RALKYLAVP) are lumenal. A helical transmembrane segment spans residues 110-130 (IYTIFKNLTIILIAYGEVLFF). At 131–133 (GGR) the chain is on the cytoplasmic side. Residues 134–154 (VTAMELSSFLLIVLSSVVATL) traverse the membrane as a helical segment. The Lumenal portion of the chain corresponds to 155 to 174 (GDQQALAKKPLAAAVESILG). Residues 175-195 (LNVGYFWMFTNCICSALFVLI) form a helical membrane-spanning segment. The Cytoplasmic portion of the chain corresponds to 196–214 (MRKRIALTKFKDFDTMFYN). Residues 215–235 (NILSLPLLMLASFMFEDWGAA) traverse the membrane as a helical segment. The Lumenal portion of the chain corresponds to 236–245 (NIARNLTKDY). Asn-240 carries an N-linked (GlcNAc...) asparagine glycan. The chain crosses the membrane as a helical span at residues 246-266 (IIIMIISGLASVGISYCSGWC). Over 267 to 273 (VRVTSST) the chain is Cytoplasmic. A helical transmembrane segment spans residues 274–294 (TYSMVGALNKLPIALSGLLFF). The Lumenal segment spans residues 295 to 298 (DAPK). The helical transmembrane segment at 299 to 319 (NFLSIFSIFLGFLSGIVYAVA) threads the bilayer. Residues 320 to 329 (KQKKQSQPAN) lie on the Cytoplasmic side of the membrane.

The protein belongs to the TPT transporter family. SLC35D subfamily. Homooligomer.

The protein localises to the golgi apparatus membrane. The protein resides in the cytoplasmic vesicle membrane. It localises to the endoplasmic reticulum membrane. In terms of biological role, involved in the import of GDP-mannose from the cytoplasm into the Golgi lumen. In Eremothecium gossypii (strain ATCC 10895 / CBS 109.51 / FGSC 9923 / NRRL Y-1056) (Yeast), this protein is GDP-mannose transporter (VRG4).